The following is a 244-amino-acid chain: Type III pantothenate kinase (244 aa).

Residue 7–14 (DIGNTRLK) participates in ATP binding. Residues Tyr-95 and 102–105 (GIDR) each bind substrate. Catalysis depends on Asp-104, which acts as the Proton acceptor. Residue Thr-126 coordinates ATP. Residue Thr-177 participates in substrate binding.

Belongs to the type III pantothenate kinase family. Homodimer. NH4(+) serves as cofactor. It depends on K(+) as a cofactor.

Its subcellular location is the cytoplasm. It catalyses the reaction (R)-pantothenate + ATP = (R)-4'-phosphopantothenate + ADP + H(+). It functions in the pathway cofactor biosynthesis; coenzyme A biosynthesis; CoA from (R)-pantothenate: step 1/5. Functionally, catalyzes the phosphorylation of pantothenate (Pan), the first step in CoA biosynthesis. This Acinetobacter baumannii (strain AB307-0294) protein is Type III pantothenate kinase.